We begin with the raw amino-acid sequence, 478 residues long: Dynein regulatory complex subunit 4 (478 aa).

The span at 1-12 shows a compositional bias: basic residues; the sequence is MAPKKKGKKGKA. A disordered region spans residues 1 to 29; the sequence is MAPKKKGKKGKAKGTAIVDGVAPEDMTKE. The regulates microtubule-binding stretch occupies residues 1–114; sequence MAPKKKGKKG…LLYEHQNNLA (114 aa). Coiled coils occupy residues 24–207 and 242–426; these read EDMT…RKTE and LNNL…ELAR. Positions 115 to 258 are microtubule-binding; sequence EVKAEGTVVM…NSLKEQMEDM (144 aa). The interval 357–478 is interaction with SMO; that stretch reads QQKTGFKNLL…GPAGLVGAPT (122 aa).

The protein belongs to the DRC4 family. In terms of assembly, component of the nexin-dynein regulatory complex (N-DRC). Interacts with microtubules. Interacts with SMO. Interacts (via coiled-coil domains) with RAB3B (in GTP-bound form). Interacts with DRC1. Interacts with DRC7. In terms of tissue distribution, highly expressed in adult testes and lung. Weakly or not expressed in other tested tissues.

It localises to the cytoplasm. The protein resides in the cytoskeleton. The protein localises to the cell projection. Its subcellular location is the cilium. It is found in the flagellum. It localises to the cilium axoneme. The protein resides in the cilium basal body. The protein localises to the golgi apparatus. Its subcellular location is the flagellum axoneme. In terms of biological role, component of the nexin-dynein regulatory complex (N-DRC), a key regulator of ciliary/flagellar motility which maintains the alignment and integrity of the distal axoneme and regulates microtubule sliding in motile axonemes. Plays an important role in the assembly of the N-DRC linker. Plays dual roles at both the primary (or non-motile) cilia to regulate hedgehog signaling and in motile cilia to coordinate cilia movement. Required for proper motile cilia functioning. Positively regulates ciliary smoothened (SMO)-dependent Hedgehog (Hh) signaling pathway by facilitating the trafficking of SMO into the cilium and the stimulation of SMO activity in a GRK2-dependent manner. May play a role in the spermatozoa motility. The polypeptide is Dynein regulatory complex subunit 4 (Gas8) (Mus musculus (Mouse)).